A 103-amino-acid polypeptide reads, in one-letter code: Small ribosomal subunit protein uS10 (103 aa).

The protein belongs to the universal ribosomal protein uS10 family. As to quaternary structure, part of the 30S ribosomal subunit.

Its function is as follows. Involved in the binding of tRNA to the ribosomes. This is Small ribosomal subunit protein uS10 from Pseudoalteromonas translucida (strain TAC 125).